The following is a 170-amino-acid chain: Protein FAM209 (170 aa).

An N-terminal signal peptide occupies residues 1–20 (MRTLLRWCLFLSLCVSCACA). Residues 56–76 (WLGNKWLWLFVAIMIYVMLKF) traverse the membrane as a helical segment. A disordered region spans residues 83–107 (KEQHPPGLRGCQLRSPPKKAQNISP).

As to quaternary structure, interacts with DPY19L2. Interacts with CYLC1; the interaction may be relevant for proper acrosome attachment to the nuclear envelope. As to expression, predominately expressed in testis.

The protein resides in the nucleus inner membrane. In terms of biological role, required for sperm acrosome biogenesis. The sequence is that of Protein FAM209 from Mus musculus (Mouse).